The chain runs to 27 residues: Snake venom serine protease Afaacytin alpha/beta/beta' chains (27 aa).

The 27-residue stretch at 1–27 folds into the Peptidase S1 domain; that stretch reads VIGGAECNINEHRSLVLLYXSSSXFGE.

The protein belongs to the peptidase S1 family. Snake venom subfamily. As to quaternary structure, heterodimer of an alpha and a beta chain. Subunit beta is constituted of two disulfide-linked polypeptidic chains, beta and beta'. Calcium appears to be required for structural cohesion of the molecule. In terms of processing, both chains alpha and beta are N-glycosylated. As to expression, expressed by the venom gland.

Its subcellular location is the secreted. With respect to regulation, inhibited by diisopropylfluorophosphate (DFP), benzamidine, heparin and hirudin, but not by plasmatic thrombin inhibitors, antithrombin-III and ecotin. In terms of biological role, snake venom serine protease that exhibits alpha-fibrinase and beta-fibrinogenase activities. It replaces missing factors VIII (F8) and IX (F9) in deficient plasmas by activating purified human factor X (F10) into factor Xa. It releases serotonin from platelets and induces platelet aggregation in human (but not in rabbit). Has caseinolytic, arginine-esterase and amidase activities. The polypeptide is Snake venom serine protease Afaacytin alpha/beta/beta' chains (Cerastes cerastes (Horned desert viper)).